We begin with the raw amino-acid sequence, 158 residues long: Acetolactate synthase small subunit (158 aa).

The 76-residue stretch at 4-79 (MIIAKLHNVT…DVIEVADITD (76 aa)) folds into the ACT domain.

The protein belongs to the acetolactate synthase small subunit family. In terms of assembly, dimer of large and small chains.

The enzyme catalyses 2 pyruvate + H(+) = (2S)-2-acetolactate + CO2. It participates in amino-acid biosynthesis; L-isoleucine biosynthesis; L-isoleucine from 2-oxobutanoate: step 1/4. The protein operates within amino-acid biosynthesis; L-valine biosynthesis; L-valine from pyruvate: step 1/4. The protein is Acetolactate synthase small subunit (ilvH) of Lactococcus lactis subsp. lactis (strain IL1403) (Streptococcus lactis).